A 255-amino-acid chain; its full sequence is MSKSGLWVGTSWKMNKTLAEAMVFADGLAAADDARDQRIQRFVIPPFTAARQVKERLKATSVKVGAQNMHWDDAGAWTGEISPVMLSDCDLDIVELGHSERREHFGETDRTVGLKTAAAVKHGLVPLICIGETLAQREAGEADTVLKRQVEGAFAFLEGAARKAPVLLAYEPVWAIGVNGIPATADYADARHRLIGEVAERALGVKVPVLYGGSVNPQNCEELILQPHIDGLFIGRSAWDVGGYLDILQRVARAI.

Catalysis depends on histidine 98, which acts as the Electrophile. Catalysis depends on glutamate 171, which acts as the Proton acceptor. Substrate is bound by residues glycine 177 and serine 214.

This sequence belongs to the triosephosphate isomerase family. Homodimer.

The protein localises to the cytoplasm. It carries out the reaction L-erythrulose 1-phosphate = D-erythrulose 4-phosphate. It functions in the pathway carbohydrate metabolism; erythritol degradation. Functionally, catalyzes the isomerization of D-erythrulose-4P to L-erythrulose-1P. This is L-erythrulose-1-phosphate isomerase from Rhizobium meliloti (strain 1021) (Ensifer meliloti).